A 347-amino-acid polypeptide reads, in one-letter code: Oxygen sensor histidine kinase NreB (347 aa).

[4Fe-4S] cluster is bound by residues Cys59, Cys62, Cys74, and Cys77. The 195-residue stretch at 153–347 (RISRELHDGI…IVTLEVPITD (195 aa)) folds into the Histidine kinase domain. A Phosphohistidine; by autocatalysis modification is found at His159.

It depends on [4Fe-4S] cluster as a cofactor. Autophosphorylated.

It is found in the cytoplasm. The catalysed reaction is ATP + protein L-histidine = ADP + protein N-phospho-L-histidine.. With respect to regulation, activated by cysteine desulfurase, Fe(2+) ions and cysteine and inhibited by oxygen and ADP. Functionally, member of the two-component regulatory system NreB/NreC involved in the control of dissimilatory nitrate/nitrite reduction in response to oxygen. NreB functions as a direct oxygen sensor histidine kinase which is autophosphorylated, in the absence of oxygen, probably at the conserved histidine residue, and transfers its phosphate group probably to a conserved aspartate residue of NreC. NreB/NreC activates the expression of the nitrate (narGHJI) and nitrite (nir) reductase operons, as well as the putative nitrate transporter gene narT. This Staphylococcus carnosus (strain TM300) protein is Oxygen sensor histidine kinase NreB (nreB).